Reading from the N-terminus, the 345-residue chain is Phosphoribosylformylglycinamidine cyclo-ligase (345 aa).

Belongs to the AIR synthase family.

It is found in the cytoplasm. The enzyme catalyses 2-formamido-N(1)-(5-O-phospho-beta-D-ribosyl)acetamidine + ATP = 5-amino-1-(5-phospho-beta-D-ribosyl)imidazole + ADP + phosphate + H(+). The protein operates within purine metabolism; IMP biosynthesis via de novo pathway; 5-amino-1-(5-phospho-D-ribosyl)imidazole from N(2)-formyl-N(1)-(5-phospho-D-ribosyl)glycinamide: step 2/2. This is Phosphoribosylformylglycinamidine cyclo-ligase from Mannheimia succiniciproducens (strain KCTC 0769BP / MBEL55E).